The sequence spans 245 residues: 1-(5-phosphoribosyl)-5-[(5-phosphoribosylamino)methylideneamino] imidazole-4-carboxamide isomerase (245 aa).

Aspartate 7 functions as the Proton acceptor in the catalytic mechanism. The Proton donor role is filled by aspartate 129.

Belongs to the HisA/HisF family.

It localises to the cytoplasm. The enzyme catalyses 1-(5-phospho-beta-D-ribosyl)-5-[(5-phospho-beta-D-ribosylamino)methylideneamino]imidazole-4-carboxamide = 5-[(5-phospho-1-deoxy-D-ribulos-1-ylimino)methylamino]-1-(5-phospho-beta-D-ribosyl)imidazole-4-carboxamide. It functions in the pathway amino-acid biosynthesis; L-histidine biosynthesis; L-histidine from 5-phospho-alpha-D-ribose 1-diphosphate: step 4/9. This Escherichia coli O6:K15:H31 (strain 536 / UPEC) protein is 1-(5-phosphoribosyl)-5-[(5-phosphoribosylamino)methylideneamino] imidazole-4-carboxamide isomerase.